The following is a 587-amino-acid chain: Branchpoint-bridging protein (587 aa).

Polar residues predominate over residues 1–16 (MLNSRSVGSTGSNNTP). 2 disordered regions span residues 1–64 (MLNS…DGRG) and 121–142 (GDVV…DNHG). Over residues 44-64 (DSYKSNSRMDHRPDGYHDGRG) the composition is skewed to basic and acidic residues. 2 positions are modified to phosphoserine: S131 and S133. One can recognise a KH domain in the interval 191 to 271 (YVPVKDYPEI…DKINHAIKLI (81 aa)). 2 consecutive CCHC-type zinc fingers follow at residues 309–326 (QVCQ…DCPE) and 334–351 (IVCR…DCPV). Disordered stretches follow at residues 375–490 (GGGS…PGTS) and 551–587 (IPGA…YSNR). Polar residues predominate over residues 379-399 (AISNGNGEPQKSIEFSESGAA). Residues 410–454 (AAASTSVSSSTSSPAPWAKPASSAAPSNPAPWQQPAAPQSAPALS) show a composition bias toward low complexity. 2 stretches are compositionally biased toward polar residues: residues 465-483 (QPTQ…SQNA) and 563-573 (SYNTSESSNLN).

This sequence belongs to the BBP/SF1 family. U2AF large subunit (u2af59), U2AF small subunit (u2af23) and bpb1 interact to form a complex required for complex A formation.

Its subcellular location is the cytoplasm. It localises to the nucleus. Its function is as follows. Necessary for the splicing of pre-mRNA. The BPB1(SF1)-u2af59-u2af23 complex has a role in the recognition of the branch site (5'-UACUAAC-3'), the pyrimidine tract and the 3'-splice site at the 3'-end of introns. This Schizosaccharomyces pombe (strain 972 / ATCC 24843) (Fission yeast) protein is Branchpoint-bridging protein (bpb1).